The primary structure comprises 516 residues: Amino-acid permease BAT1 (516 aa).

12 consecutive transmembrane segments (helical) span residues 33-53, 70-90, 113-133, 164-184, 189-209, 232-252, 275-295, 328-348, 383-403, 406-426, 452-472, and 483-503; these read LSVF…TGIT, YGWF…AEIC, PLAS…VTAS, VVIG…SLPI, FIGQ…MILI, LGIT…QYTI, GIIS…LGIS, FGSG…VFFC, VPIN…LTSL, IVAF…AYAI, VVGW…SLPV, and YTPV…LFSA.

It belongs to the amino acid-polyamine-organocation (APC) superfamily. Amino acid/choline transporter (ACT) (TC 2.A.3.4) family. Expressed in roots, rosette leaves, stems, cauline leaves, flowers and siliques.

The protein resides in the mitochondrion membrane. Functionally, may play a role in primary carbon metabolism and plant growth, by mediating the transport of GABA from the cytosol to mitochondria. When expressed in a heterologous system (yeast), imports Arg and Ala across the plasma membrane and exports Lys and Glu, but does not transport proline. The chain is Amino-acid permease BAT1 (BAT1) from Arabidopsis thaliana (Mouse-ear cress).